A 299-amino-acid polypeptide reads, in one-letter code: Zinc import ATP-binding protein ZnuC (299 aa).

An ABC transporter domain is found at 13–228; the sequence is VSLANAGVQR…PEYMRLFGGT (216 aa). 45–52 serves as a coordination point for ATP; sequence GPNGSGKS.

This sequence belongs to the ABC transporter superfamily. Zinc importer (TC 3.A.1.15.5) family. In terms of assembly, the complex is composed of two ATP-binding proteins (ZnuC), two transmembrane proteins (ZnuB) and a solute-binding protein (ZnuA).

The protein localises to the cell inner membrane. The enzyme catalyses Zn(2+)(out) + ATP(in) + H2O(in) = Zn(2+)(in) + ADP(in) + phosphate(in) + H(+)(in). In terms of biological role, part of the ABC transporter complex ZnuABC involved in zinc import. Responsible for energy coupling to the transport system. This is Zinc import ATP-binding protein ZnuC from Agrobacterium fabrum (strain C58 / ATCC 33970) (Agrobacterium tumefaciens (strain C58)).